We begin with the raw amino-acid sequence, 839 residues long: Dynein axonemal assembly factor 5 (839 aa).

HEAT repeat units follow at residues 10–48 (TSDVTKALARHLNCLNDENKMIRRRALAAIQKEAADEKL), 54–92 (QHVFLELLKPLLRCLSDPMEKCRELSIQIIVYCVSHVPR), 94–137 (EEAL…VCGK), 140–178 (APYLDEMIQIFQRTMVDPFPDVKKESCKCASNYATCIPE), 181–219 (HMQAESLIKPLMQTISHQHSKVRVAVIQTTGTVIQYSSG), 221–257 (SVDDVLSHLAQRLFDDSVQVRQAVTVVVGDWLLKLQD), 259–297 (YSFFHKLIPLLLSSTTDEIPEIRKLALDYWEKIGSQWEK), 578–617 (GETLHLFVPILKMCLQPTREPQMRLKLFTMLSKLLLKASE), 675–713 (LQVEDNLMPRVITTLEEDSKMCRLMSCCIITALLSTCER), 717–755 (PDKLNKIYPELLKRLDDASDEVRVAAAKTLYQWFKCITD), and 723–761 (IYPELLKRLDDASDEVRVAAAKTLYQWFKCITDEYERTT).

This sequence belongs to the DNAAF5 family. Interacts with DNAI2; probably involved in outer arm dynein assembly.

The protein localises to the cytoplasm. It localises to the dynein axonemal particle. Its function is as follows. Cytoplasmic protein involved in the delivery of the dynein machinery to the motile cilium. It is required for the assembly of the axonemal dynein inner and outer arms, two structures attached to the peripheral outer doublet A microtubule of the axoneme, that play a crucial role in cilium motility. This chain is Dynein axonemal assembly factor 5, found in Xenopus laevis (African clawed frog).